The chain runs to 251 residues: Flap endonuclease Xni (251 aa).

Residue aspartate 104 coordinates Mg(2+). The region spanning 160–249 is the 5'-3' exonuclease domain; that stretch reads VLPRQLPDYW…IDGNLQQLRL (90 aa). K(+) contacts are provided by leucine 171, alanine 172, proline 180, valine 182, and isoleucine 185. Positions 184–189 are interaction with DNA; it reads GIGPKS.

It belongs to the Xni family. Requires Mg(2+) as cofactor. It depends on K(+) as a cofactor.

In terms of biological role, has flap endonuclease activity. During DNA replication, flap endonucleases cleave the 5'-overhanging flap structure that is generated by displacement synthesis when DNA polymerase encounters the 5'-end of a downstream Okazaki fragment. This chain is Flap endonuclease Xni, found in Salmonella heidelberg (strain SL476).